We begin with the raw amino-acid sequence, 182 residues long: MIFDEFTLKSQIRAVPDFPKAGVVFRDITPLFQSPRALRMTVDSFVQRYIEADFSHIGAMDARGFLIGSAVAYALNKPLILFRKQGKLPADVLAEAYQTEYGEAFLEVHADSLCEGDSVLIFDDLIATGGTLLAAASLVRRLGARVFEAAAIIDLPELGGSTRLQDAGIATFSLTAFALDER.

It belongs to the purine/pyrimidine phosphoribosyltransferase family. As to quaternary structure, homodimer.

Its subcellular location is the cytoplasm. It carries out the reaction AMP + diphosphate = 5-phospho-alpha-D-ribose 1-diphosphate + adenine. The protein operates within purine metabolism; AMP biosynthesis via salvage pathway; AMP from adenine: step 1/1. Functionally, catalyzes a salvage reaction resulting in the formation of AMP, that is energically less costly than de novo synthesis. In Pseudomonas paraeruginosa (strain DSM 24068 / PA7) (Pseudomonas aeruginosa (strain PA7)), this protein is Adenine phosphoribosyltransferase.